The primary structure comprises 396 residues: Tryptophan synthase beta chain (396 aa).

Residue Lys-86 is modified to N6-(pyridoxal phosphate)lysine.

The protein belongs to the TrpB family. Tetramer of two alpha and two beta chains. It depends on pyridoxal 5'-phosphate as a cofactor.

It catalyses the reaction (1S,2R)-1-C-(indol-3-yl)glycerol 3-phosphate + L-serine = D-glyceraldehyde 3-phosphate + L-tryptophan + H2O. It participates in amino-acid biosynthesis; L-tryptophan biosynthesis; L-tryptophan from chorismate: step 5/5. The beta subunit is responsible for the synthesis of L-tryptophan from indole and L-serine. This is Tryptophan synthase beta chain from Erwinia tasmaniensis (strain DSM 17950 / CFBP 7177 / CIP 109463 / NCPPB 4357 / Et1/99).